The sequence spans 141 residues: Large ribosomal subunit protein uL11 (141 aa).

It belongs to the universal ribosomal protein uL11 family. As to quaternary structure, part of the ribosomal stalk of the 50S ribosomal subunit. Interacts with L10 and the large rRNA to form the base of the stalk. L10 forms an elongated spine to which L12 dimers bind in a sequential fashion forming a multimeric L10(L12)X complex. Post-translationally, one or more lysine residues are methylated.

In terms of biological role, forms part of the ribosomal stalk which helps the ribosome interact with GTP-bound translation factors. The polypeptide is Large ribosomal subunit protein uL11 (Clostridium perfringens (strain ATCC 13124 / DSM 756 / JCM 1290 / NCIMB 6125 / NCTC 8237 / Type A)).